We begin with the raw amino-acid sequence, 52 residues long: UPF0391 membrane protein Tgr7_2500 (52 aa).

2 helical membrane passes run 4-24 and 29-49; these read WALIFLIVAIIAGTLGFSGVA and WIAQVLFLVFLALLVISLLGG.

This sequence belongs to the UPF0391 family.

Its subcellular location is the cell membrane. The chain is UPF0391 membrane protein Tgr7_2500 from Thioalkalivibrio sulfidiphilus (strain HL-EbGR7).